A 249-amino-acid polypeptide reads, in one-letter code: Protein twisted gastrulation (249 aa).

An N-terminal signal peptide occupies residues 1–23; that stretch reads MQLLCYFVILFVGIAPWSSLAND. N-linked (GlcNAc...) asparagine glycosylation is present at Asn199.

It belongs to the twisted gastrulation protein family. As to quaternary structure, component of a complex composed of dpp, sog and tsg. First appears in stage 4 embryos, expressed in two domains: a broad mid-dorsal saddle and an anterior cap, expression between the domains is continuous across the dorsal midline. At stage 5, expression is refined into 4 graded stripes in the mid-dorsal region and a paired domain in the anterior region. During stages 7 and 8, anterior expression fades and the mid dorsal stripes are located between the anterior and posterior transverse furrow (ATF and PTF). Expressing cells become incorporated into the deepening PTF.

Its subcellular location is the secreted. Functionally, involved in dorsal-ventral patterning. Required for specification of a narrow strip of dorsal midline cells that will give rise to the amnioserosa, but not for specification of dorsal ectoderm cells. Inhibits BMP signaling; enhances the binding of sog to dpp, thus enhancing the antagonistic activity of sog. The protein is Protein twisted gastrulation (tsg) of Drosophila melanogaster (Fruit fly).